The chain runs to 228 residues: Apoptosis regulator R1 (228 aa).

Basic and acidic residues predominate over residues L1–E21. The tract at residues L1–G29 is disordered. The BH1 signature appears at S120 to A139. The short motif at D171–Y186 is the BH2 element. Residues T207–S227 traverse the membrane as a helical segment.

Belongs to the Bcl-2 family.

It localises to the membrane. Its function is as follows. Could be the homolog of mammalian Bcl-W. This Xenopus laevis (African clawed frog) protein is Apoptosis regulator R1.